The following is an 85-amino-acid chain: Large ribosomal subunit protein bL27 (85 aa).

The segment at 1–23 (MAHKKAGGSSRNGRDSESKRLGV) is disordered.

This sequence belongs to the bacterial ribosomal protein bL27 family.

The chain is Large ribosomal subunit protein bL27 from Nitrosococcus oceani (strain ATCC 19707 / BCRC 17464 / JCM 30415 / NCIMB 11848 / C-107).